The following is a 576-amino-acid chain: K(+)/H(+) antiporter NhaP2 (576 aa).

13 consecutive transmembrane segments (helical) span residues 6 to 26, 34 to 54, 58 to 78, 87 to 107, 109 to 129, 163 to 183, 185 to 205, 219 to 239, 242 to 262, 271 to 291, 299 to 319, 335 to 355, and 359 to 379; these read INSF…LSPM, ILLI…GGIL, YSTA…DGGM, VALW…TSIT, MMAA…GAIV, PMAV…DTEM, FSFM…LGLG, LADG…YAAS, LGGS…NKPT, VLDG…GLLL, ILIP…PVAV, WFIS…VFPM, and LPGA…SLLV. The RCK C-terminal domain maps to 405–486; it reads SGVEIYPSSE…LEALSNLFSQ (82 aa).

The protein belongs to the monovalent cation:proton antiporter 1 (CPA1) transporter (TC 2.A.36) family. NhaP2 subfamily.

The protein localises to the cell inner membrane. It catalyses the reaction K(+)(in) + H(+)(out) = K(+)(out) + H(+)(in). In terms of biological role, k(+)/H(+) antiporter that extrudes potassium in exchange for external protons and maintains the internal concentration of potassium under toxic levels. This is K(+)/H(+) antiporter NhaP2 from Shewanella baltica (strain OS223).